The primary structure comprises 257 residues: Acyl-[acyl-carrier-protein]--UDP-N-acetylglucosamine O-acyltransferase (257 aa).

It belongs to the transferase hexapeptide repeat family. LpxA subfamily. In terms of assembly, homotrimer.

It is found in the cytoplasm. It carries out the reaction a (3R)-hydroxyacyl-[ACP] + UDP-N-acetyl-alpha-D-glucosamine = a UDP-3-O-[(3R)-3-hydroxyacyl]-N-acetyl-alpha-D-glucosamine + holo-[ACP]. Its pathway is glycolipid biosynthesis; lipid IV(A) biosynthesis; lipid IV(A) from (3R)-3-hydroxytetradecanoyl-[acyl-carrier-protein] and UDP-N-acetyl-alpha-D-glucosamine: step 1/6. Functionally, involved in the biosynthesis of lipid A, a phosphorylated glycolipid that anchors the lipopolysaccharide to the outer membrane of the cell. This Anaeromyxobacter sp. (strain K) protein is Acyl-[acyl-carrier-protein]--UDP-N-acetylglucosamine O-acyltransferase.